The sequence spans 451 residues: Phosphoglucosamine mutase (451 aa).

Serine 107 functions as the Phosphoserine intermediate in the catalytic mechanism. Residues serine 107, aspartate 246, aspartate 248, and aspartate 250 each contribute to the Mg(2+) site. Serine 107 carries the phosphoserine modification.

It belongs to the phosphohexose mutase family. Mg(2+) serves as cofactor. In terms of processing, activated by phosphorylation.

It catalyses the reaction alpha-D-glucosamine 1-phosphate = D-glucosamine 6-phosphate. Catalyzes the conversion of glucosamine-6-phosphate to glucosamine-1-phosphate. In Burkholderia multivorans (strain ATCC 17616 / 249), this protein is Phosphoglucosamine mutase.